Here is a 417-residue protein sequence, read N- to C-terminus: Serine hydroxymethyltransferase (417 aa).

Residues Leu-121 and 125–127 (GHL) each bind (6S)-5,6,7,8-tetrahydrofolate. Lys-229 is subject to N6-(pyridoxal phosphate)lysine. 355-357 (SPF) provides a ligand contact to (6S)-5,6,7,8-tetrahydrofolate.

The protein belongs to the SHMT family. Homodimer. It depends on pyridoxal 5'-phosphate as a cofactor.

The protein localises to the cytoplasm. It catalyses the reaction (6R)-5,10-methylene-5,6,7,8-tetrahydrofolate + glycine + H2O = (6S)-5,6,7,8-tetrahydrofolate + L-serine. Its pathway is one-carbon metabolism; tetrahydrofolate interconversion. The protein operates within amino-acid biosynthesis; glycine biosynthesis; glycine from L-serine: step 1/1. In terms of biological role, catalyzes the reversible interconversion of serine and glycine with tetrahydrofolate (THF) serving as the one-carbon carrier. This reaction serves as the major source of one-carbon groups required for the biosynthesis of purines, thymidylate, methionine, and other important biomolecules. Also exhibits THF-independent aldolase activity toward beta-hydroxyamino acids, producing glycine and aldehydes, via a retro-aldol mechanism. This chain is Serine hydroxymethyltransferase, found in Serratia proteamaculans (strain 568).